A 93-amino-acid polypeptide reads, in one-letter code: Small ribosomal subunit protein uS17 (93 aa).

It belongs to the universal ribosomal protein uS17 family. Part of the 30S ribosomal subunit.

Its function is as follows. One of the primary rRNA binding proteins, it binds specifically to the 5'-end of 16S ribosomal RNA. The sequence is that of Small ribosomal subunit protein uS17 from Corynebacterium kroppenstedtii (strain DSM 44385 / JCM 11950 / CIP 105744 / CCUG 35717).